The sequence spans 742 residues: MAPSFDTLSEQDLHEEEEEEIDFSDLKAQYEVKLDEGLDTFVVIDGLPIVPEESRQKLIKFLLRKLSAAGKTSEDAVFMPLNEKNMSEGFAFVEYETPEQAVAAVKQLHGTPLDKKHTLAVNKLMDIDRYGREGRIDEEYKPPTIEPFKEKEHLRSWLADPNARDQFALYRGDKVGVFWNNKNNPPENVVDRAHWTQLFVQWSPKGTYLASVHPQGIQLWGGPAFSKLKQFPHPFVSLVEFSPAENYVTTWSARPIQVEEGGSGPLSYEEDGKNIIIWDIVTGKPLRSFVSHDLAAGPAEAEAQPKKKVQWPAFKWSADEKYVARMLQGQSISIYEAPRMNLLGKTSVKIDGVMDFEWSPATVNRDGVKQYEQLLCFWTPEIGSNPARVGMMSVPSKEIVRTRNLFNVSDVKLHWQSQGTYVCVKVDRHSKSKKSMATNLEIFRVREKGVPVEVVDSLKDTVINFAWEPNGGRFVLITTGETPTGAAVPPKTAVSFFAPEKKGGSAGNFKLVRTIEKKTSNAIYWSPKGRFVVVATVHSQSSFDLDFWDMDFEGEKPEGEKDLAANLQLMKTVEHYGVTDVDWDPTGRYVVSSASVWTHSMENGWNLHTFAGQTLSENPTDKFKQFIWRPRPPTLLSKEEQKQVRKNLREYSKEFDEEDKYAVDIANTAVVEKRKRVLSEWLAWIRREKELLAEDKDAYGLPENVDDAKMAKDAPQVSEDQGETVVEEIVEEIIEENEEVIG.

Over residues 1-10 (MAPSFDTLSE) the composition is skewed to polar residues. Positions 1-20 (MAPSFDTLSEQDLHEEEEEE) are disordered. Residues 40–126 (TFVVIDGLPI…HTLAVNKLMD (87 aa)) form the RRM domain. WD repeat units follow at residues 193 to 230 (AHWT…KLKQ), 232 to 290 (PHPF…RSFV), 304 to 345 (QPKK…LLGK), 515 to 558 (IEKK…EKPE), and 573 to 611 (VEHY…HTFA).

This sequence belongs to the eIF-3 subunit B family. As to quaternary structure, component of the eukaryotic translation initiation factor 3 (eIF-3) complex.

The protein localises to the cytoplasm. Functionally, RNA-binding component of the eukaryotic translation initiation factor 3 (eIF-3) complex, which is involved in protein synthesis of a specialized repertoire of mRNAs and, together with other initiation factors, stimulates binding of mRNA and methionyl-tRNAi to the 40S ribosome. The eIF-3 complex specifically targets and initiates translation of a subset of mRNAs involved in cell proliferation. In Aspergillus terreus (strain NIH 2624 / FGSC A1156), this protein is Eukaryotic translation initiation factor 3 subunit B (prt1).